Here is a 275-residue protein sequence, read N- to C-terminus: Large ribosomal subunit protein uL2 (275 aa).

The disordered stretch occupies residues 221–275 (RGSAMTPRDHPHGGGEGKAPRGMPPKTPWGKPALGKRTRRNKKSDRFIIRRRYEA). The segment covering 227 to 239 (PRDHPHGGGEGKA) has biased composition (basic and acidic residues). Over residues 254–263 (LGKRTRRNKK) the composition is skewed to basic residues. Residues 264–275 (SDRFIIRRRYEA) are compositionally biased toward basic and acidic residues.

It belongs to the universal ribosomal protein uL2 family. Part of the 50S ribosomal subunit. Forms a bridge to the 30S subunit in the 70S ribosome.

Its function is as follows. One of the primary rRNA binding proteins. Required for association of the 30S and 50S subunits to form the 70S ribosome, for tRNA binding and peptide bond formation. It has been suggested to have peptidyltransferase activity; this is somewhat controversial. Makes several contacts with the 16S rRNA in the 70S ribosome. The polypeptide is Large ribosomal subunit protein uL2 (Thermomicrobium roseum (strain ATCC 27502 / DSM 5159 / P-2)).